Reading from the N-terminus, the 89-residue chain is Small ribosomal subunit protein uS14 (89 aa).

This sequence belongs to the universal ribosomal protein uS14 family. As to quaternary structure, part of the 30S ribosomal subunit. Contacts proteins S3 and S10.

Binds 16S rRNA, required for the assembly of 30S particles and may also be responsible for determining the conformation of the 16S rRNA at the A site. The sequence is that of Small ribosomal subunit protein uS14 from Cytophaga hutchinsonii (strain ATCC 33406 / DSM 1761 / CIP 103989 / NBRC 15051 / NCIMB 9469 / D465).